An 876-amino-acid chain; its full sequence is MKNKLVLIDGNSVAYRAFFALPLLHNDKGIHTNAVYGFTMMLNKILAEEQPTHILVAFDAGKTTFRHETFQDYKGGRQQTPPELSEQFPLLRELLKAYRIPAYELDHYEADDIIGTMAARAEREGFAVKVISGDRDLTQLASPQVTVEITKKGITDIESYTPETVVEKYGLTPEQIVDLKGLMGDKSDNIPGVPGIGEKTAVKLLKQFGTVENVLASIDEIKGEKLKENLRQYRDLALLSKQLAAICRDAPVELTLDDIVYKGEDREKVVALFQELGFQSFLDKMAVQTDEGEKPLAGMDFAIADSVTDEMLADKAALVVEVVGDNYHHAPIVGIALANERGRFFLRPETALADPKFLAWLGDETKKKTMFDSKRAAVALKWKGIELRGVVFDLLLAAYLLDPAQAAGDVAAVAKMHQYEAVRSDEAVYGKGAKRTVPDEPTLAEHLVRKAAAIWALEEPLMDELRRNEQDRLLTELEQPLAGILANMEFTGVKVDTKRLEQMGAELTEQLQAVERRIYELAGQEFNINSPKQLGTVLFDKLQLPVLKKTKTGYSTSADVLEKLAPHHEIVEHILHYRQLGKLQSTYIEGLLKVVHPVTGKVHTMFNQALTQTGRLSSVEPNLQNIPIRLEEGRKIRQAFVPSEPDWLIFAADYSQIELRVLAHIAEDDNLIEAFRRGLDIHTKTAMDIFHVSEEDVTANMRRQAKAVNFGIVYGISDYGLAQNLNITRKEAAEFIERYFASFPGVKQYMDNIVQEAKQKGYVTTLLHRRRYLPDITSRNFNVRSFAERTAMNTPIQGSAADIIKKAMIDLSVRLREERLQARLLLQVHDELILEAPKEEIERLCRLVPEVMEQAVTLRVPLKVDYHYGPTWYDAK.

Residues 1 to 310 form the 5'-3' exonuclease domain; it reads MKNKLVLIDG…FAIADSVTDE (310 aa). The segment at 289–876 is subtilisin large fragment; the sequence is TDEGEKPLAG…HYGPTWYDAK (588 aa). The segment at 469–876 is polymerase; the sequence is EQDRLLTELE…HYGPTWYDAK (408 aa).

This sequence belongs to the DNA polymerase type-A family. Single-chain monomer with multiple functions.

It catalyses the reaction DNA(n) + a 2'-deoxyribonucleoside 5'-triphosphate = DNA(n+1) + diphosphate. Functionally, in addition to polymerase activity, the recombinant enzyme has strand displacement and 5'-3' exonuclease activity, but lacks proofreading 3'-5' exonuclease activity. The chain is DNA polymerase I (polA) from Geobacillus stearothermophilus (Bacillus stearothermophilus).